Reading from the N-terminus, the 889-residue chain is MADTTVEKLATEVGKSVERLIEQFSQAGIKKGQTDNVSEAEKQQLLDYLKKQHGGESAPTKMTLQRKTVSTLSVAGNGGQSKDVKVEVRKTRTFVKRDVSEAVLKAEEEAKAKAEAEAQAKAEAEAKARAEAEAKAKADAEAKAEAKAKADAEAKAKAKAATDAKTTKDTSPEAEAARVEAERLKAAQAEATKRKQDEEAAKAAEKARLLAEENSKRWDEEERQRKEAERYSDHHITTSKVARAAEDSSDMDEEKRGRRARNKNTAKTKRGGKDARDGREKHMRNRSTAPESMAHGFNKPVAAVTRDVRIGETVTVAELAHLMAVKATEIIKQMMKMGSMVTINQVLDQETAQLVAEEMGHKVVLIRENELEQQVLSERDEEGGVKLEPRAPVVTIMGHVDHGKTSLLDYIRRAKVAAGEAGGITQHIGAYHVETENGMITFLDTPGHAAFTAMRARGAKATDIVVLVVAADDGVMPQTIEAIQHAKAGNVPLIVAVNKMDKPEADIDRVKSELAQHGVMSEDWGGDNMFAFVSAKTGAGVDDLLEGILLQAEVLELKAVRDGMAAGVVIESQLDKGRGPVATILVQEGTLRQGDIVLCGLEYGKIRAMKDENGRSITEAGPSIPVEILGLSGVPSAGDEATVVRDERKAREVALYRQGKFRDVKLARQQKSKLENMFANMTEGEVKELNIVLKADVQGSLEAITDSLMGLSTDEVKVNIIARGVGALTETDATLAAASNAIMVGFNVRADAQARKTIESESVDLRYYSVIYNLIDEVKAAMTGMLSPEFKQQIIGLAEVRDVFKSPKLGAIAGCMVTEGTIKRSAPIRVLRDNVVIFEGELESLRRFKDDVNEVRNGMECGIGVKNYNDVRVGDQIEVFETVEVARTL.

The span at 115–236 (EAEAQAKAEA…EAERYSDHHI (122 aa)) shows a compositional bias: basic and acidic residues. The disordered stretch occupies residues 115-293 (EAEAQAKAEA…RNRSTAPESM (179 aa)). The segment covering 257-270 (GRRARNKNTAKTKR) has biased composition (basic residues). Residues 271 to 280 (GGKDARDGRE) show a composition bias toward basic and acidic residues. The tr-type G domain occupies 389-558 (PRAPVVTIMG…LLQAEVLELK (170 aa)). The segment at 398–405 (GHVDHGKT) is G1. Position 398 to 405 (398 to 405 (GHVDHGKT)) interacts with GTP. The tract at residues 423-427 (GITQH) is G2. Residues 444–447 (DTPG) are G3. GTP-binding positions include 444-448 (DTPGH) and 498-501 (NKMD). The segment at 498-501 (NKMD) is G4. A G5 region spans residues 534 to 536 (SAK).

The protein belongs to the TRAFAC class translation factor GTPase superfamily. Classic translation factor GTPase family. IF-2 subfamily.

The protein resides in the cytoplasm. One of the essential components for the initiation of protein synthesis. Protects formylmethionyl-tRNA from spontaneous hydrolysis and promotes its binding to the 30S ribosomal subunits. Also involved in the hydrolysis of GTP during the formation of the 70S ribosomal complex. This Shewanella sp. (strain ANA-3) protein is Translation initiation factor IF-2.